A 615-amino-acid polypeptide reads, in one-letter code: Pentatricopeptide repeat-containing protein At2g25580 (615 aa).

The segment at 40-98 is disordered; that stretch reads FGNSNDSSEMNPREGYNGRIQNRTGSSGEVSESIHTQSQSLGSNQGRNEQSWKQSPSLS. The span at 58 to 98 shows a compositional bias: polar residues; the sequence is RIQNRTGSSGEVSESIHTQSQSLGSNQGRNEQSWKQSPSLS. PPR repeat units follow at residues 288–318, 319–353, 354–389, and 390–420; these read DLSS…MSEK, NLET…GNIP, DGQL…GIAP, and SIED…MPME. The tract at residues 490–520 is type E(+) motif; the sequence is SSMQEFRAGDTNLPENDELFQLLRNLKMHMV. The segment at 521–615 is type DYW motif; the sequence is EVGYVAETRM…NGACTCKDYW (95 aa).

Belongs to the PPR family. PCMP-H subfamily.

This Arabidopsis thaliana (Mouse-ear cress) protein is Pentatricopeptide repeat-containing protein At2g25580 (PCMP-H75).